The chain runs to 531 residues: Putative cysteine ligase BshC (531 aa).

The stretch at 447-481 (KAQEKKQTKGLDNLEKRLLKAEKKMHSEKLKKIIE) forms a coiled coil.

This sequence belongs to the BshC family.

The sequence is that of Putative cysteine ligase BshC from Flavobacterium psychrophilum (strain ATCC 49511 / DSM 21280 / CIP 103535 / JIP02/86).